Here is a 505-residue protein sequence, read N- to C-terminus: Calcium/calmodulin-dependent protein kinase kinase 1 (505 aa).

Residues 28–66 are disordered; the sequence is LEEADEGPEPARNGVDPPPRARAASVIPGSASRPTPVRP. Phosphoserine occurs at positions 67 and 74. Residue arginine 78 is modified to Asymmetric dimethylarginine. A disordered region spans residues 84-105; sequence LGAQVGPYSTGPASHISPRSWR. Phosphoserine is present on serine 100. A Phosphothreonine modification is found at threonine 108. Residues 128 to 409 form the Protein kinase domain; the sequence is YKLQSEIGKG…VSDIKLHPWV (282 aa). ATP contacts are provided by residues 134–142 and lysine 157; that span reads IGKGAYGVV. Residues 167-189 are RP domain; the sequence is QYGFPRRPPPRGSQATQGGPAKQ. Aspartate 275 acts as the Proton acceptor in catalysis. Positions 435 to 440 are autoinhibitory domain; sequence KNSVRL. Positions 438–463 are calmodulin-binding; sequence VRLIPSWTTVILVKSMLRKRSFGNPF. A phosphoserine mark is found at serine 458, serine 475, and serine 492. A disordered region spans residues 460-505; that stretch reads GNPFEPQARREERSMSAPGSLLMKEGCGEGCKSPELPGVQEDEAAS.

Belongs to the protein kinase superfamily. Ser/Thr protein kinase family. In terms of assembly, interacts with CAMK4 and calmodulin. Post-translationally, appears to be autophosphorylated in a Ca(2+)/calmodulin-dependent manner. Phosphorylated at multiple sites by PRCAKA/PKA. Phosphorylation of Ser-458 is blocked upon binding to Ca(2+)/calmodulin. In vitro, phosphorylated by CAMK1 and CAMK4. As to expression, widely expressed. Differentially expressed in various brain regions.

The protein localises to the cytoplasm. It localises to the nucleus. It catalyses the reaction L-seryl-[protein] + ATP = O-phospho-L-seryl-[protein] + ADP + H(+). The catalysed reaction is L-threonyl-[protein] + ATP = O-phospho-L-threonyl-[protein] + ADP + H(+). With respect to regulation, activated by Ca(2+)/calmodulin. Binding of calmodulin may relieve intrasteric autoinhibition. Partially inhibited upon phosphorylation by PRCAKA/PKA. May be regulated through phosphorylation by CAMK1 and CAMK4. In terms of biological role, calcium/calmodulin-dependent protein kinase that belongs to a proposed calcium-triggered signaling cascade involved in a number of cellular processes. Phosphorylates CAMK1, CAMK1D, CAMK1G and CAMK4. Involved in regulating cell apoptosis. Promotes cell survival by phosphorylating AKT1/PKB that inhibits pro-apoptotic BAD/Bcl2-antagonist of cell death. This is Calcium/calmodulin-dependent protein kinase kinase 1 (Camkk1) from Mus musculus (Mouse).